The following is a 675-amino-acid chain: Regulator of G-protein signaling 9 (675 aa).

The 76-residue stretch at 30–105 (PETGVRMHNQ…PDSSLYRFQT (76 aa)) folds into the DEP domain. The G protein gamma domain maps to 222-283 (VRKEIMYYQQ…DTQFWDLNAK (62 aa)). In terms of domain architecture, RGS spans 299–414 (NFSELIRDPK…LKSPIYKEML (116 aa)). 2 disordered regions span residues 524–571 (RVAL…PPKA) and 637–662 (DSGT…EKEV). The span at 542–551 (SGANSGPSVT) shows a compositional bias: polar residues. Basic and acidic residues-rich tracts occupy residues 552–562 (ENREPSADHSR) and 646–662 (DDPR…EKEV).

Heterodimer with GNB5. Interacts with RGS7BP, leading to regulate the subcellular location of the heterodimer formed with GNB5. Component of the RGS9-1-Gbeta5 complex composed of RGS9 (RGS9-1), Gbeta5 (GNB5) and RGS9BP. Interacts with PDE6G and GNAT1. In terms of processing, retinal isoform 1 is light-dependent phosphorylated at 'Ser-475'. Phosphorylation is decreased by light exposition. Interaction with RGS9BP is decreased when isoform 1 is phosphorylated at 'Ser-475'. Isoform 1 is expressed in photoreceptor outer segments. Isoform 2 is expressed in brain striatum.

The protein resides in the membrane. In terms of biological role, inhibits signal transduction by increasing the GTPase activity of G protein alpha subunits thereby driving them into their inactive GDP-bound form. Binds to GNAT1. Involved in phototransduction; key element in the recovery phase of visual transduction. This is Regulator of G-protein signaling 9 (Rgs9) from Mus musculus (Mouse).